The primary structure comprises 329 residues: Cardiolipin synthase (CMP-forming) (329 aa).

The transit peptide at methionine 1 to proline 34 directs the protein to the mitochondrion. The disordered stretch occupies residues phenylalanine 27–threonine 55. Over residues alanine 32–proline 44 the composition is skewed to pro residues. The next 5 membrane-spanning stretches (helical) occupy residues leucine 134–serine 154, phenylalanine 156–valine 176, phenylalanine 194–leucine 214, proline 228–valine 248, and valine 298–valine 318. Residues tyrosine 319–lysine 329 are Mitochondrial intermembrane-facing.

It belongs to the CDP-alcohol phosphatidyltransferase class-I family. The cofactor is Mn(2+).

It is found in the mitochondrion inner membrane. It catalyses the reaction a CDP-1,2-diacyl-sn-glycerol + a 1,2-diacyl-sn-glycero-3-phospho-(1'-sn-glycerol) = a cardiolipin + CMP + H(+). Its function is as follows. Catalyzes the synthesis of cardiolipin (CL) (diphosphatidylglycerol) by specifically transferring a phosphatidyl group from CDP-diacylglycerol to phosphatidylglycerol (PG). CL is a key phospholipid in mitochondrial membranes and plays important roles in maintaining the functional integrity and dynamics of mitochondria under both optimal and stress conditions. This Oryza sativa subsp. japonica (Rice) protein is Cardiolipin synthase (CMP-forming).